A 479-amino-acid polypeptide reads, in one-letter code: Lincomycin resistance protein LmrB (479 aa).

Transmembrane regions (helical) follow at residues 19–41, 56–78, 85–107, 112–134, 141–160, 170–192, 205–222, 232–251, 272–294, 304–326, 338–355, 360–382, 403–425, and 449–471; these read MISL…IALT, WLTT…LLQW, FTVS…SFSF, RIVQ…LVIF, AAMG…GPTF, WHWI…IAYM, VLSI…VFGF, WSSP…LILF, MFIL…MLLL, LTAF…MSPV, WLVI…WFFS, TSTA…MIMM, IMNT…IMAA, and AGVQ…GAFF.

It belongs to the major facilitator superfamily. EmrB family.

It is found in the cell membrane. Its function is as follows. Proton-dependent transporter. May mediate the efflux of lincomycin. The sequence is that of Lincomycin resistance protein LmrB (lmrB) from Bacillus subtilis (strain 168).